The primary structure comprises 523 residues: Cytoplasmic dynein 1 light intermediate chain 1 (523 aa).

Residues 1-25 form a disordered region; it reads MAAVGRVGSFGSSPPGLASTYASGP. ATP is bound at residue 74 to 81; it reads GEDGAGKT. Disordered regions lie at residues 200–219, 387–434, and 457–523; these read PGEDFPASPQRRTTGAQEDR, PPTA…DPNM, and GSPG…GEAS. Residue Ser207 is modified to Phosphoserine. Phosphothreonine is present on Thr213. Residues Ser398 and Ser405 each carry the phosphoserine modification. A Phosphothreonine modification is found at Thr408. Ser412, Ser419, Ser421, and Ser427 each carry phosphoserine. Residues 412-421 show a composition bias toward low complexity; sequence SVSSNVASVS. Over residues 458 to 473 the composition is skewed to gly residues; that stretch reads SPGGPGVGGSPGGGAA. Over residues 474–485 the composition is skewed to low complexity; that stretch reads GASPSLPPSAKK. A phosphoserine mark is found at Ser486 and Ser510. Over residues 506–523 the composition is skewed to low complexity; it reads PASVSPTTPTSPTEGEAS. Phosphothreonine is present on residues Thr512, Thr513, and Thr515. Position 516 is a phosphoserine (Ser516).

The protein belongs to the dynein light intermediate chain family. Homodimer. The cytoplasmic dynein 1 complex consists of two catalytic heavy chains (HCs) and a number of non-catalytic subunits presented by intermediate chains (ICs), light intermediate chains (LICs) and light chains (LCs); the composition seems to vary in respect to the IC, LIC and LC composition. The heavy chain homodimer serves as a scaffold for the probable homodimeric assembly of the respective non-catalytic subunits. The ICs and LICs bind directly to the HC dimer and the LCs assemble on the IC dimer. Self-associates. Interacts with DYNC1H1; DYNC1LI1 and DYNC1LI2 bind mutually exclusive to DYNC1H1. Interacts with PCNT. Forms a complex with RAB11FIP3 and RAB11A1; the interaction between DYNC1LI1 and RAB11FIP3 is direct and induces DYNC1LI1 localization onto endosomal membrane; the complex regulates endocytic trafficking. Interacts with RUFY3. Post-translationally, phosphorylated during mitosis but not in interphase.

The protein localises to the cytoplasm. Its subcellular location is the chromosome. It is found in the centromere. It localises to the kinetochore. The protein resides in the cytoskeleton. The protein localises to the spindle pole. Its subcellular location is the recycling endosome membrane. Functionally, acts as one of several non-catalytic accessory components of the cytoplasmic dynein 1 complex that are thought to be involved in linking dynein to cargos and to adapter proteins that regulate dynein function. Cytoplasmic dynein 1 acts as a motor for the intracellular retrograde motility of vesicles and organelles along microtubules. May play a role in binding dynein to membranous organelles or chromosomes. Probably involved in the microtubule-dependent transport of pericentrin. Is required for progress through the spindle assembly checkpoint. The phosphorylated form appears to be involved in the selective removal of MAD1L1 and MAD1L2 but not BUB1B from kinetochores. Forms a functional Rab11/RAB11FIP3/dynein complex onto endosomal membrane that regulates the movement of peripheral sorting endosomes (SE) along microtubule tracks toward the microtubule organizing center/centrosome, generating the endosomal recycling compartment (ERC). In Mus musculus (Mouse), this protein is Cytoplasmic dynein 1 light intermediate chain 1 (Dync1li1).